Reading from the N-terminus, the 761-residue chain is NADP-dependent malic enzyme (761 aa).

Residues 1 to 437 form a malic enzyme region; it reads MPGIDKTDRA…QLSARRDPIA (437 aa). Tyr-49 acts as the Proton donor in catalysis. Catalysis depends on Lys-104, which acts as the Proton acceptor. A divalent metal cation contacts are provided by Glu-146, Asp-147, and Asp-172. NADP(+)-binding positions include 205 to 208, Asn-297, and Asn-329; that span reads AGAA. Residues 438-761 are phosphate acetyltransferase; the sequence is STLQRIVERV…AAIAAYNAGT (324 aa).

It in the N-terminal section; belongs to the malic enzymes family. This sequence in the C-terminal section; belongs to the phosphate acetyltransferase and butyryltransferase family. Homooctamer. Requires Mg(2+) as cofactor. The cofactor is Mn(2+).

It carries out the reaction (S)-malate + NADP(+) = pyruvate + CO2 + NADPH. The enzyme catalyses oxaloacetate + H(+) = pyruvate + CO2. In Rhizobium meliloti (strain 1021) (Ensifer meliloti), this protein is NADP-dependent malic enzyme (tme).